The primary structure comprises 258 residues: Type III pantothenate kinase (258 aa).

Position 6 to 13 (6 to 13 (DVGNTNTV)) interacts with ATP. Substrate is bound by residues Tyr-100 and 107-110 (GADR). The Proton acceptor role is filled by Asp-109. Residue Asp-129 coordinates K(+). Thr-132 lines the ATP pocket. Thr-184 is a substrate binding site.

Belongs to the type III pantothenate kinase family. As to quaternary structure, homodimer. NH4(+) is required as a cofactor. It depends on K(+) as a cofactor.

The protein localises to the cytoplasm. It carries out the reaction (R)-pantothenate + ATP = (R)-4'-phosphopantothenate + ADP + H(+). It participates in cofactor biosynthesis; coenzyme A biosynthesis; CoA from (R)-pantothenate: step 1/5. In terms of biological role, catalyzes the phosphorylation of pantothenate (Pan), the first step in CoA biosynthesis. This is Type III pantothenate kinase from Bacillus velezensis (strain DSM 23117 / BGSC 10A6 / LMG 26770 / FZB42) (Bacillus amyloliquefaciens subsp. plantarum).